The chain runs to 350 residues: Glyoxylate reductase 1 (350 aa).

Residue threonine 31 is modified to Phosphothreonine. NAD(+)-binding positions include 173 to 174 (RI), 252 to 254 (TAR), and aspartate 278. The active site involves arginine 254. Residue glutamate 283 is part of the active site. Residue histidine 301 is the Proton donor of the active site. 301–304 (HMGT) is an NAD(+) binding site.

The protein belongs to the D-isomer specific 2-hydroxyacid dehydrogenase family.

The protein localises to the cytoplasm. It localises to the nucleus. The protein resides in the mitochondrion. It catalyses the reaction glycolate + NAD(+) = glyoxylate + NADH + H(+). The catalysed reaction is glycolate + NADP(+) = glyoxylate + NADPH + H(+). The enzyme catalyses (R)-glycerate + NAD(+) = 3-hydroxypyruvate + NADH + H(+). It carries out the reaction (R)-glycerate + NADP(+) = 3-hydroxypyruvate + NADPH + H(+). Functionally, glyoxylate reductase that reversibly reduces glyoxylate to glycolate, or alternatively hydroxypyruvate to D-glycerate, using either NADPH or NADH as a cosubstrate. Does not act as a hydroxyisocaproate dehydrogenase even though it also has minor activity on alpha-ketoisocaproate. The chain is Glyoxylate reductase 1 from Saccharomyces cerevisiae (strain ATCC 204508 / S288c) (Baker's yeast).